Reading from the N-terminus, the 387-residue chain is LL-diaminopimelate aminotransferase (387 aa).

Residues Tyr14 and Gly39 each contribute to the substrate site. Pyridoxal 5'-phosphate contacts are provided by residues Tyr68, 102–103, Tyr127, Asn177, Tyr208, and 236–238; these read SK and SLS. Residues Lys103, Tyr127, and Asn177 each coordinate substrate. N6-(pyridoxal phosphate)lysine is present on Lys239. Arg247 lines the pyridoxal 5'-phosphate pocket. Residue Arg365 participates in substrate binding.

This sequence belongs to the class-I pyridoxal-phosphate-dependent aminotransferase family. LL-diaminopimelate aminotransferase subfamily. In terms of assembly, homodimer. Pyridoxal 5'-phosphate serves as cofactor.

The enzyme catalyses (2S,6S)-2,6-diaminopimelate + 2-oxoglutarate = (S)-2,3,4,5-tetrahydrodipicolinate + L-glutamate + H2O + H(+). The protein operates within amino-acid biosynthesis; L-lysine biosynthesis via DAP pathway; LL-2,6-diaminopimelate from (S)-tetrahydrodipicolinate (aminotransferase route): step 1/1. Involved in the synthesis of meso-diaminopimelate (m-DAP or DL-DAP), required for both lysine and peptidoglycan biosynthesis. Catalyzes the direct conversion of tetrahydrodipicolinate to LL-diaminopimelate. This is LL-diaminopimelate aminotransferase from Aquifex aeolicus (strain VF5).